We begin with the raw amino-acid sequence, 38 residues long: Cytochrome b6-f complex subunit 5 (38 aa).

The chain crosses the membrane as a helical span at residues 5–25 (LLLGIVLGLIPITLAGLFVAA).

It belongs to the PetG family. In terms of assembly, the 4 large subunits of the cytochrome b6-f complex are cytochrome b6, subunit IV (17 kDa polypeptide, PetD), cytochrome f and the Rieske protein, while the 4 small subunits are PetG, PetL, PetM and PetN. The complex functions as a dimer.

The protein resides in the cellular thylakoid membrane. Its function is as follows. Component of the cytochrome b6-f complex, which mediates electron transfer between photosystem II (PSII) and photosystem I (PSI), cyclic electron flow around PSI, and state transitions. PetG is required for either the stability or assembly of the cytochrome b6-f complex. The sequence is that of Cytochrome b6-f complex subunit 5 from Rippkaea orientalis (strain PCC 8801 / RF-1) (Cyanothece sp. (strain PCC 8801)).